The primary structure comprises 378 residues: Monomethylxanthine methyltransferase 1 (378 aa).

Residues Y18, C61, N66, D100, L101, S139, F140, and C156 each contribute to the S-adenosyl-L-homocysteine site. The theobromine site is built by Y157, H160, and W161. Residues N178, D260, F262, and N263 each contribute to the Mg(2+) site. Y362 contacts theobromine.

This sequence belongs to the methyltransferase superfamily. Type-7 methyltransferase family. Mg(2+) serves as cofactor. As to expression, expressed, at low levels, in stems, young leaves, floral buds and immature fruits (grains), but not in roots, old leaves and mature fruits.

Its subcellular location is the cytoplasm. The enzyme catalyses 7-methylxanthine + S-adenosyl-L-methionine = theobromine + S-adenosyl-L-homocysteine + H(+). Its pathway is alkaloid biosynthesis. In terms of biological role, involved in the biosynthesis of caffeine. Catalyzes the conversion of 7-methylxanthine (7mX) to theobromine and of paraxanthine to caffeine. Has a 5-fold preference for 7mX. The polypeptide is Monomethylxanthine methyltransferase 1 (Coffea arabica (Arabian coffee)).